We begin with the raw amino-acid sequence, 407 residues long: uncharacterized protein (407 aa).

This sequence belongs to the peptidase U32 family.

This is an uncharacterized protein from Methanocaldococcus jannaschii (strain ATCC 43067 / DSM 2661 / JAL-1 / JCM 10045 / NBRC 100440) (Methanococcus jannaschii).